Reading from the N-terminus, the 446-residue chain is MKPVIALVGRPNVGKSTLFNRLTRSRDALVADLPGLTRDRHYGEGRVGGERPYLVVDTGGFEPVAKDGILFEMARQTRQAVEESDVIVFIVDGRNGLAPQDKSIADYLRKTGRPIFLVVNKAEGMKYTNVAADFYELGLGDPRAISAAHGDGVTEMINEALDVAYAGQPEESDEEKAQHGIKIAIVGRPNVGKSTLVNTLIGEDRVIAFDMPGTTRDSIYVDFERQGKKYTLIDTAGLRKRGKVFEAIEKFSVVKTLQSISDANVVILLLDARQDISEQDAHIAGFVVEQGRALVVGVNKWDGLDPHVRERTKSDLQRKLKFLEFAKFHFISAAEKTGIGPLMRSVDDAYKAAMSKLPTPKLTRALIEAVEFQQPRRRGPVRPKLRYAHQGGQNPPIIVIHGNALDAVTDTYKRYLENRFRETFALTGTPLRIEFRSSTNPYADKD.

EngA-type G domains follow at residues Pro3–Gln168 and Ile181–Met354. GTP is bound by residues Gly9–Ser16, Asp57–Phe61, Asn120–Glu123, Gly187–Ser194, Asp234–Leu238, and Asn299–Asp302. Positions Ser355–Thr439 constitute a KH-like domain.

This sequence belongs to the TRAFAC class TrmE-Era-EngA-EngB-Septin-like GTPase superfamily. EngA (Der) GTPase family. Associates with the 50S ribosomal subunit.

GTPase that plays an essential role in the late steps of ribosome biogenesis. This is GTPase Der from Paraburkholderia phymatum (strain DSM 17167 / CIP 108236 / LMG 21445 / STM815) (Burkholderia phymatum).